The chain runs to 86 residues: Large ribosomal subunit protein bL27 (86 aa).

The segment at 1-23 (MAHKKGTGSTRNGRDSNSKRLGV) is disordered.

The protein belongs to the bacterial ribosomal protein bL27 family.

This is Large ribosomal subunit protein bL27 from Prochlorococcus marinus (strain MIT 9515).